Here is a 472-residue protein sequence, read N- to C-terminus: Aspartyl/glutamyl-tRNA(Asn/Gln) amidotransferase subunit B (472 aa).

It belongs to the GatB/GatE family. GatB subfamily. Heterotrimer of A, B and C subunits.

The enzyme catalyses L-glutamyl-tRNA(Gln) + L-glutamine + ATP + H2O = L-glutaminyl-tRNA(Gln) + L-glutamate + ADP + phosphate + H(+). It carries out the reaction L-aspartyl-tRNA(Asn) + L-glutamine + ATP + H2O = L-asparaginyl-tRNA(Asn) + L-glutamate + ADP + phosphate + 2 H(+). Its function is as follows. Allows the formation of correctly charged Asn-tRNA(Asn) or Gln-tRNA(Gln) through the transamidation of misacylated Asp-tRNA(Asn) or Glu-tRNA(Gln) in organisms which lack either or both of asparaginyl-tRNA or glutaminyl-tRNA synthetases. The reaction takes place in the presence of glutamine and ATP through an activated phospho-Asp-tRNA(Asn) or phospho-Glu-tRNA(Gln). The protein is Aspartyl/glutamyl-tRNA(Asn/Gln) amidotransferase subunit B of Campylobacter jejuni subsp. jejuni serotype O:23/36 (strain 81-176).